A 501-amino-acid polypeptide reads, in one-letter code: 1-aminocyclopropane-1-carboxylate synthase-like protein 1 (501 aa).

E105 contributes to the substrate binding site. The residue at position 323 (K323) is an N6-(pyridoxal phosphate)lysine. The segment at G480–R501 is disordered. Polar residues predominate over residues P490 to R501.

Belongs to the class-I pyridoxal-phosphate-dependent aminotransferase family.

Its function is as follows. Does not catalyze the synthesis of 1-aminocyclopropane-1-carboxylate but is capable of catalyzing the deamination of L-vinylglycine. The sequence is that of 1-aminocyclopropane-1-carboxylate synthase-like protein 1 (ACCS) from Homo sapiens (Human).